The sequence spans 104 residues: Integration host factor subunit alpha (104 aa).

Belongs to the bacterial histone-like protein family. As to quaternary structure, heterodimer of an alpha and a beta chain.

This protein is one of the two subunits of integration host factor, a specific DNA-binding protein that functions in genetic recombination as well as in transcriptional and translational control. This chain is Integration host factor subunit alpha, found in Buchnera aphidicola subsp. Cinara cedri (strain Cc).